A 219-amino-acid polypeptide reads, in one-letter code: DnaJ homolog subfamily C member 30, mitochondrial (219 aa).

The transit peptide at 1 to 38 (MAAARCLGWTLSPLWRWWQVRGLPPSSATGLCSRGRTY) directs the protein to the mitochondrion. Residues 42 to 107 (ALYELLGVPS…ILRRKYDRGL (66 aa)) form the J domain. The disordered stretch occupies residues 109 to 148 (SDQDLRGPGVKPSKTPVADPAPPRPPPYTPRAPGGSRASP). The span at 127-138 (DPAPPRPPPYTP) shows a compositional bias: pro residues. Residues 202 to 218 (ATFFVVLFLIFVFVGFR) form a helical membrane-spanning segment.

As to quaternary structure, associates with the ATP synthase complex. Interacts with MT-ATP6; interaction is direct. Interacts with ATP5MC2; interaction is direct. In terms of tissue distribution, in brain, expressed in gray matter structures.

The protein localises to the mitochondrion inner membrane. Mitochondrial protein enriched in neurons that acts as a regulator of mitochondrial respiration. Associates with the ATP synthase complex and facilitates ATP synthesis. May be a chaperone protein involved in the turnover of the subunits of mitochondrial complex I N-module. It facilitates the degradation of N-module subunits damaged by oxidative stress, and contributes to complex I functional efficiency. The polypeptide is DnaJ homolog subfamily C member 30, mitochondrial (Mus musculus (Mouse)).